We begin with the raw amino-acid sequence, 164 residues long: ATP synthase subunit b (164 aa).

The helical transmembrane segment at 8-28 threads the bilayer; the sequence is FGIIFWQTITLLFVLFILGKF.

The protein belongs to the ATPase B chain family. F-type ATPases have 2 components, F(1) - the catalytic core - and F(0) - the membrane proton channel. F(1) has five subunits: alpha(3), beta(3), gamma(1), delta(1), epsilon(1). F(0) has three main subunits: a(1), b(2) and c(10-14). The alpha and beta chains form an alternating ring which encloses part of the gamma chain. F(1) is attached to F(0) by a central stalk formed by the gamma and epsilon chains, while a peripheral stalk is formed by the delta and b chains.

Its subcellular location is the cell membrane. Its function is as follows. F(1)F(0) ATP synthase produces ATP from ADP in the presence of a proton or sodium gradient. F-type ATPases consist of two structural domains, F(1) containing the extramembraneous catalytic core and F(0) containing the membrane proton channel, linked together by a central stalk and a peripheral stalk. During catalysis, ATP synthesis in the catalytic domain of F(1) is coupled via a rotary mechanism of the central stalk subunits to proton translocation. Functionally, component of the F(0) channel, it forms part of the peripheral stalk, linking F(1) to F(0). This chain is ATP synthase subunit b, found in Amoebophilus asiaticus (strain 5a2).